The chain runs to 143 residues: uncharacterized protein (143 aa).

Residues Leu-65–Val-85 traverse the membrane as a helical segment.

Its subcellular location is the membrane. This is an uncharacterized protein from Saccharomyces cerevisiae (strain ATCC 204508 / S288c) (Baker's yeast).